A 472-amino-acid polypeptide reads, in one-letter code: CAAX prenyl protease 1 homolog (472 aa).

Residues 1–8 (MDVGGALD) lie on the Lumenal side of the membrane. The helical transmembrane segment at 9–29 (LYGCSVNVYNAILIFIWVLFL) threads the bilayer. Topologically, residues 30–75 (WETYINLRQLKVAKRVTESPEEIKCLMNDVDFDKSRRYAIDKMNFD) are cytoplasmic. The chain crosses the membrane as a helical span at residues 76-96 (IVSGFYNILSLSAVLYFQLIA). Residues 97 to 124 (WAWHKSQEHMLFVCSYAPRSFGTTEGSE) lie on the Lumenal side of the membrane. The helical transmembrane segment at 125-145 (ILFSLLFTVYVALFQFFESLP) threads the bilayer. The Cytoplasmic segment spans residues 146–175 (WSYYRHFVIEERYGFNKQTIGFFIKDRLKS). A helical transmembrane segment spans residues 176–196 (LAVGLVIGLPIISMLVWIIKA). The Lumenal portion of the chain corresponds to 197 to 207 (GGHYFYIYAYG). The chain crosses the membrane as a helical span at residues 208-228 (FTFVVSFIIMFIYPEFIAPIF). Over 229-340 (DRYEHFPDCE…LGHWKLKHMT (112 aa)) the chain is Cytoplasmic. Position 329 (histidine 329) interacts with Zn(2+). Glutamate 330 is an active-site residue. Histidine 333 is a Zn(2+) binding site. Residues 341–361 (FNLIIAQINIFFMFFAFGQLI) form a helical membrane-spanning segment. The Lumenal portion of the chain corresponds to 362–382 (NVDQLFVDFGFPPSTAPILIR). Residues 383–403 (LIVVFQFIFMPYSSVLEFLMT) traverse the membrane as a helical segment. The Cytoplasmic segment spans residues 404–472 (MLSRKFEFQA…AIDAKMGKEK (69 aa)). Glutamate 410 is a binding site for Zn(2+). Catalysis depends on aspartate 414, which acts as the Proton donor.

The protein belongs to the peptidase M48A family. Homodimer; disulfide-linked. Zn(2+) is required as a cofactor.

The protein resides in the endoplasmic reticulum membrane. The catalysed reaction is Hydrolyzes the peptide bond -P2-(S-farnesyl or geranylgeranyl)C-P1'-P2'-P3'-COOH where P1' and P2' are amino acids with aliphatic side chains and P3' is any C-terminal residue.. Its activity is regulated as follows. Inhibited by ethylenediaminetetraacetic acid (EDTA) but not by serine, aspartic or cysteine protease inhibitors. Inhibited by high concentration of Zn(2+) (&gt; 0.1 mM). Its function is as follows. Zinc-dependent metalloproteinase. Proteolytically removes the C-terminal three residues of farnesylated proteins. The chain is CAAX prenyl protease 1 homolog from Taenia solium (Pork tapeworm).